The following is a 313-amino-acid chain: Carbamate kinase 2 (313 aa).

It belongs to the carbamate kinase family.

The protein localises to the cytoplasm. It carries out the reaction hydrogencarbonate + NH4(+) + ATP = carbamoyl phosphate + ADP + H2O + H(+). It functions in the pathway metabolic intermediate metabolism; carbamoyl phosphate degradation; CO(2) and NH(3) from carbamoyl phosphate: step 1/1. In Staphylococcus aureus (strain USA300), this protein is Carbamate kinase 2 (arcC2).